Here is a 723-residue protein sequence, read N- to C-terminus: Fatty acid oxidation complex subunit alpha (723 aa).

The segment at 1 to 189 (MIYQAETLQV…KIGLLDAVVD (189 aa)) is enoyl-CoA hydratase/isomerase. Asp-296 contributes to the substrate binding site. Residues 311-723 (NKETQRAAVL…FYGAQQQGSI (413 aa)) form a 3-hydroxyacyl-CoA dehydrogenase region. NAD(+)-binding positions include Met-325, Asp-344, 401–403 (VVE), Lys-408, and Ser-430. His-451 (for 3-hydroxyacyl-CoA dehydrogenase activity) is an active-site residue. Asn-454 lines the NAD(+) pocket. The substrate site is built by Asn-501 and Tyr-661.

It in the N-terminal section; belongs to the enoyl-CoA hydratase/isomerase family. This sequence in the C-terminal section; belongs to the 3-hydroxyacyl-CoA dehydrogenase family. As to quaternary structure, heterotetramer of two alpha chains (FadB) and two beta chains (FadA).

The enzyme catalyses a (3S)-3-hydroxyacyl-CoA + NAD(+) = a 3-oxoacyl-CoA + NADH + H(+). The catalysed reaction is a (3S)-3-hydroxyacyl-CoA = a (2E)-enoyl-CoA + H2O. It catalyses the reaction a 4-saturated-(3S)-3-hydroxyacyl-CoA = a (3E)-enoyl-CoA + H2O. It carries out the reaction (3S)-3-hydroxybutanoyl-CoA = (3R)-3-hydroxybutanoyl-CoA. The enzyme catalyses a (3Z)-enoyl-CoA = a 4-saturated (2E)-enoyl-CoA. The catalysed reaction is a (3E)-enoyl-CoA = a 4-saturated (2E)-enoyl-CoA. It functions in the pathway lipid metabolism; fatty acid beta-oxidation. In terms of biological role, involved in the aerobic and anaerobic degradation of long-chain fatty acids via beta-oxidation cycle. Catalyzes the formation of 3-oxoacyl-CoA from enoyl-CoA via L-3-hydroxyacyl-CoA. It can also use D-3-hydroxyacyl-CoA and cis-3-enoyl-CoA as substrate. The chain is Fatty acid oxidation complex subunit alpha from Vibrio vulnificus (strain CMCP6).